The sequence spans 160 residues: MGKVKVERSEDADESVVASGDVTIKEEESYDDKLIFVNAIAKPMAGKKLAKKCYKLVKKAMKHKTFLRNGLKDVQTRLRKGETGICIFAGDVTPVDIMCHLPAVCEEKGIPYTYTPSRADLGAAMGVKRGTVALLVRQNEEYKDLYDEVKEELSALNIPV.

Residue S15 is modified to Phosphoserine. T23 bears the Phosphothreonine mark.

Belongs to the eukaryotic ribosomal protein eL8 family. As to quaternary structure, component of the box H/ACA small nucleolar ribonucleoprotein (H/ACA snoRNP) complex consisting of Nop60B, Gar1, NPH2 and Nop10, and associated with H/ACA-type snoRNAs.

Its subcellular location is the nucleus. It is found in the nucleolus. Component of the box H/ACA small nucleolar ribonucleoprotein (H/ACA snoRNP) complex, which catalyzes pseudouridylation of rRNA. This involves the isomerization of uridine such that the ribose is subsequently attached to C5, instead of the normal N1. Pseudouridine ('psi') residues may serve to stabilize the conformation of rRNAs. Required for ribosome biogenesis. H/ACA snoRNP complex-dependent ribosome biogenesis is important in female germline cell differentiation during oogenesis. This Drosophila melanogaster (Fruit fly) protein is H/ACA ribonucleoprotein complex subunit 2.